Consider the following 469-residue polypeptide: uncharacterized protein (469 aa).

3 helical membrane-spanning segments follow: residues 42 to 62 (DVIIFLLLFFVAFNVSSAYVI), 179 to 199 (IVLPPGAVILSPQGTLLVTPS), and 249 to 269 (NLKYLLIIAIFGTAIFGGLFV).

Its subcellular location is the cell membrane. This is an uncharacterized protein from Methanocaldococcus jannaschii (strain ATCC 43067 / DSM 2661 / JAL-1 / JCM 10045 / NBRC 100440) (Methanococcus jannaschii).